Consider the following 92-residue polypeptide: MPRSLKKGPYIEPKLLNKVMVAQESRSKRVIRTWSRRSTIIPEMVGLTLAVHNGKKFLPVFVTENMVGHKLGEFSPTRTFYGHAGDKKTRGK.

It belongs to the universal ribosomal protein uS19 family.

Its function is as follows. Protein S19 forms a complex with S13 that binds strongly to the 16S ribosomal RNA. The sequence is that of Small ribosomal subunit protein uS19 from Desulfatibacillum aliphaticivorans.